We begin with the raw amino-acid sequence, 940 residues long: BTB/POZ domain-containing protein FBL11 (940 aa).

The BTB domain occupies 41–109; sequence WDMSEILSYG…LYGYDIEITS (69 aa). The region spanning 155 to 258 is the BACK domain; that stretch reads IQIWSFGLEH…FSLLPLWFIA (104 aa).

It participates in protein modification; protein ubiquitination. Functionally, may act as a substrate-specific adapter of an E3 ubiquitin-protein ligase complex (CUL3-RBX1-BTB) which mediates the ubiquitination and subsequent proteasomal degradation of target proteins. This Arabidopsis thaliana (Mouse-ear cress) protein is BTB/POZ domain-containing protein FBL11 (FBL11).